A 31-amino-acid chain; its full sequence is Cytochrome b6-f complex subunit 6 (31 aa).

Residues 4–24 (IFSYIALLLSALVITLTCYIG) traverse the membrane as a helical segment.

It belongs to the PetL family. In terms of assembly, the 4 large subunits of the cytochrome b6-f complex are cytochrome b6, subunit IV (17 kDa polypeptide, PetD), cytochrome f and the Rieske protein, while the 4 small subunits are PetG, PetL, PetM and PetN. The complex functions as a dimer.

Its subcellular location is the plastid. It is found in the chloroplast thylakoid membrane. Functionally, component of the cytochrome b6-f complex, which mediates electron transfer between photosystem II (PSII) and photosystem I (PSI), cyclic electron flow around PSI, and state transitions. PetL is important for photoautotrophic growth as well as for electron transfer efficiency and stability of the cytochrome b6-f complex. This is Cytochrome b6-f complex subunit 6 from Chlorella vulgaris (Green alga).